The sequence spans 317 residues: MKIIFAGTPEFAAVALAALHAAGFEIPLVLTQPDRPAGRGMQLQASAVKQFALAHKIPVAQPISLRLDGKYPDVAQEAHDLLRATPHDVMVVAAYGLILPQSVLDIPPLGCLNIHASLLPRWRGAAPIHRAIEVGDEKTGITIMQMELGLDTGPMLLMESLPIAADDTTASLHDKLARLGGEMIVEALLKLEKGELTATPQPEAGANYAAKIAKEEATLDLRQSAQELARKIRAFNPFPGAMGICNGTPVKFWQAQALECSNQWPAGQVISANAQDGVVIACGDGALRVTELQKPGGKRLPAAEFIKGFALEAQRFQ.

Residue 117 to 120 (SLLP) participates in (6S)-5,6,7,8-tetrahydrofolate binding.

Belongs to the Fmt family.

The catalysed reaction is L-methionyl-tRNA(fMet) + (6R)-10-formyltetrahydrofolate = N-formyl-L-methionyl-tRNA(fMet) + (6S)-5,6,7,8-tetrahydrofolate + H(+). Attaches a formyl group to the free amino group of methionyl-tRNA(fMet). The formyl group appears to play a dual role in the initiator identity of N-formylmethionyl-tRNA by promoting its recognition by IF2 and preventing the misappropriation of this tRNA by the elongation apparatus. The sequence is that of Methionyl-tRNA formyltransferase from Herminiimonas arsenicoxydans.